We begin with the raw amino-acid sequence, 1027 residues long: Sodium/potassium-transporting ATPase subunit alpha-1 (1027 aa).

Positions 1–5 are excised as a propeptide; that stretch reads MGVGD. Positions 1 to 10 are enriched in basic and acidic residues; sequence MGVGDGRDQY. A disordered region spans residues 1-39; it reads MGVGDGRDQYELAAMSEQSGKKKSKNKKEKKEKDMDELK. Over 6–90 the chain is Cytoplasmic; that stretch reads GRDQYELAAM…NALTPPPTTP (85 aa). Residue S16 is modified to Phosphoserine; by PKC. Residues 29–39 show a composition bias toward basic and acidic residues; sequence EKKEKDMDELK. The interaction with phosphoinositide-3 kinase stretch occupies residues 85–87; the sequence is PPP. A helical transmembrane segment spans residues 91-111; the sequence is EWVKFCKQMFGGFSMLLWTGA. Residues 112-134 are Extracellular-facing; it reads VLCFLAYGILAAMEDEPANDNLY. The helical transmembrane segment at 135-155 threads the bilayer; that stretch reads LGVVLSAVVIITGCFSYYQDA. Topologically, residues 156 to 291 are cytoplasmic; sequence KSSKIMDSFK…VGRTPISIEI (136 aa). The interval 217–238 is disordered; it reads DNSSLTGESEPQTRSPDFSNDN. A helical membrane pass occupies residues 292-311; sequence EHFIHIITGVAVFLGVSFLL. At 312-323 the chain is on the extracellular side; the sequence is LSLVLGYSWLEA. The chain crosses the membrane as a helical span at residues 324–341; it reads VIFLIGIIVANVPEGLLA. Topologically, residues 342-776 are cytoplasmic; that stretch reads TVTVCLTLTA…EEGRLIFDNL (435 aa). The active-site 4-aspartylphosphate intermediate is the D379. Position 490 (K490) interacts with ATP. Mg(2+)-binding residues include D721 and D725. Residues 777–796 form a helical membrane-spanning segment; the sequence is KKSIAYTLTSNIPEITPFLF. At 797–806 the chain is on the extracellular side; sequence FIIANIPLPL. A helical transmembrane segment spans residues 807 to 827; the sequence is GTVTILCIDLGTDMLPAISLA. Residues 828-847 lie on the Cytoplasmic side of the membrane; the sequence is YEAAESDIMKRQPRNPKTDK. Residues 848 to 870 traverse the membrane as a helical segment; it reads LVNERLISIAYGQIGMIQALAGF. The Extracellular portion of the chain corresponds to 871–922; sequence FTYFVILAENGFLPPRLLGIRMNWDDKYINDLEDSYGQQWTYEQRKIVEFTC. The helical transmembrane segment at 923 to 942 threads the bilayer; it reads HTAFFTSIVIVQWADLIICK. The Cytoplasmic portion of the chain corresponds to 943–955; sequence TRRNSVFQQGMKN. S947 bears the Phosphoserine; by PKA mark. Residues 956–974 traverse the membrane as a helical segment; the sequence is KILIFGLFEETALAAFLSY. Topologically, residues 975–989 are extracellular; that stretch reads CPGMDVALRMYPLKP. A helical transmembrane segment spans residues 990-1010; it reads NWWFCAFPYSLLIFIYDEIRK. Residues 1011–1027 lie on the Cytoplasmic side of the membrane; it reads LILRRNPGGWMERETYY.

This sequence belongs to the cation transport ATPase (P-type) (TC 3.A.3) family. Type IIC subfamily. In terms of assembly, the sodium/potassium-transporting ATPase is composed of a catalytic alpha subunit, an auxiliary non-catalytic beta subunit and an additional regulatory subunit.

It localises to the cell membrane. It is found in the sarcolemma. It carries out the reaction K(+)(out) + Na(+)(in) + ATP + H2O = K(+)(in) + Na(+)(out) + ADP + phosphate + H(+). Its function is as follows. This is the catalytic component of the active enzyme, which catalyzes the hydrolysis of ATP coupled with the exchange of sodium and potassium ions across the plasma membrane. This action creates the electrochemical gradient of sodium and potassium ions, providing the energy for active transport of various nutrients. This Catostomus commersonii (White sucker) protein is Sodium/potassium-transporting ATPase subunit alpha-1 (atp1a1).